We begin with the raw amino-acid sequence, 375 residues long: MALSAVQKVVLFSCLVLCVSLLLPRAYIARGKPAAQEGNTGLFQSSGHHPKPTDGRPGGAHFPRSHMAEAMSKAKGGTGGGGGGGTRPSLVGQIIPIYGFGILLYILYILFKLSSKGKSTKQEPTTQPVANGNLKRKITDYELSQLQDKLKETEEAMEKIISRLGPNSERTDNVSSDEETDLLQRLKEITRVMKEGKILDGISPEKEAEEAPYMEDWNGYPEETYPVYDPSDCKRTQQTILVDCSALNRPSAEQVAEQMGFDEEDDQENGSGNLAKEPDYKDSVGGDQQAQGTISAQGKVVGTGEDIEEDEDEDEDPEVIAENAGFISDSCNEEEDPKESFMDLGNEKGPLGATLGSNRDETGTLRKRNTKGIEY.

A signal peptide spans Met1–Ala29. At Arg30 to Leu90 the chain is on the lumenal side. The span at Gly38–Gly47 shows a compositional bias: polar residues. The segment at Gly38–Pro63 is disordered. A helical membrane pass occupies residues Val91–Phe111. The Cytoplasmic portion of the chain corresponds to Lys112–Tyr375. A coiled-coil region spans residues Lys135–Gly165. The segment at Ser251 to Tyr375 is disordered. Polar residues predominate over residues Gly286–Ala296. A compositionally biased stretch (acidic residues) spans Glu305–Val319. The segment covering Leu365–Tyr375 has biased composition (basic residues).

This sequence belongs to the ric-3 family.

It localises to the endoplasmic reticulum membrane. In terms of biological role, molecular chaperone which facilitates proper subunit assembly andsurface trafficking of alpha-7 (CHRNA7) and alpha-8 (CHRNA8) nicotinic acetylcholine receptors. May also promote functional expression of homomeric serotoninergic 5-HT3 receptors, and of heteromeric acetylcholine receptors. This chain is Protein RIC-3 (ric3), found in Xenopus tropicalis (Western clawed frog).